Reading from the N-terminus, the 167-residue chain is Photosystem I assembly protein Ycf3 (167 aa).

3 TPR repeats span residues 35–68 (AFTYYRDGMSAQSEGEYAEALQNYYEAMRLEIDP), 72–105 (SYILYNIGLIHTSNGEHAKAIEYYLQALERNPSL), and 120–153 (GEQAVEKEDLETSEAWFDQAADYWKQAIALAPNN).

It belongs to the Ycf3 family.

It localises to the plastid. Its subcellular location is the chloroplast thylakoid membrane. In terms of biological role, essential for the assembly of the photosystem I (PSI) complex. May act as a chaperone-like factor to guide the assembly of the PSI subunits. The sequence is that of Photosystem I assembly protein Ycf3 from Zygnema circumcarinatum (Green alga).